The following is a 22-amino-acid chain: Major outer membrane protein (22 aa).

It belongs to the Gram-negative porin family. In terms of assembly, disulfide bond interactions within and between MOMP molecules and other components form high molecular-weight oligomers.

It is found in the cell outer membrane. Functionally, structural rigidity of the outer membrane of elementary bodies and porin forming, permitting diffusion of solutes through the intracellular reticulate body membrane. The chain is Major outer membrane protein (ompH) from Avibacterium gallinarum (Pasteurella gallinarum).